The following is a 310-amino-acid chain: Methionyl-tRNA formyltransferase (310 aa).

A (6S)-5,6,7,8-tetrahydrofolate-binding site is contributed by 111–114; that stretch reads SILP.

The protein belongs to the Fmt family.

It carries out the reaction L-methionyl-tRNA(fMet) + (6R)-10-formyltetrahydrofolate = N-formyl-L-methionyl-tRNA(fMet) + (6S)-5,6,7,8-tetrahydrofolate + H(+). In terms of biological role, attaches a formyl group to the free amino group of methionyl-tRNA(fMet). The formyl group appears to play a dual role in the initiator identity of N-formylmethionyl-tRNA by promoting its recognition by IF2 and preventing the misappropriation of this tRNA by the elongation apparatus. This chain is Methionyl-tRNA formyltransferase, found in Methylobacterium nodulans (strain LMG 21967 / CNCM I-2342 / ORS 2060).